A 328-amino-acid polypeptide reads, in one-letter code: Probable cell division protein WhiA (328 aa).

A DNA-binding region (H-T-H motif) is located at residues S276–S309.

The protein belongs to the WhiA family.

Functionally, involved in cell division and chromosome segregation. The polypeptide is Probable cell division protein WhiA (Corynebacterium diphtheriae (strain ATCC 700971 / NCTC 13129 / Biotype gravis)).